A 207-amino-acid chain; its full sequence is Large ribosomal subunit protein uL4 (207 aa).

Belongs to the universal ribosomal protein uL4 family. In terms of assembly, part of the 50S ribosomal subunit.

Its function is as follows. One of the primary rRNA binding proteins, this protein initially binds near the 5'-end of the 23S rRNA. It is important during the early stages of 50S assembly. It makes multiple contacts with different domains of the 23S rRNA in the assembled 50S subunit and ribosome. In terms of biological role, forms part of the polypeptide exit tunnel. The polypeptide is Large ribosomal subunit protein uL4 (Geobacter sulfurreducens (strain ATCC 51573 / DSM 12127 / PCA)).